The following is a 294-amino-acid chain: Ribosomal RNA small subunit methyltransferase H (294 aa).

Residues 36–38 (GGH), Asp55, Phe82, Asp97, and Gln104 each bind S-adenosyl-L-methionine. Residues 265-285 (KPTVATDDEQNRNPRSRSAKW) are disordered.

This sequence belongs to the methyltransferase superfamily. RsmH family.

The protein resides in the cytoplasm. The enzyme catalyses cytidine(1402) in 16S rRNA + S-adenosyl-L-methionine = N(4)-methylcytidine(1402) in 16S rRNA + S-adenosyl-L-homocysteine + H(+). Specifically methylates the N4 position of cytidine in position 1402 (C1402) of 16S rRNA. The protein is Ribosomal RNA small subunit methyltransferase H of Synechococcus sp. (strain CC9902).